The primary structure comprises 299 residues: Ribosomal RNA small subunit methyltransferase H (299 aa).

S-adenosyl-L-methionine-binding positions include 36 to 38 (GGH), aspartate 55, aspartate 103, and glutamine 110. Basic and acidic residues-rich tracts occupy residues 268 to 282 (KPVR…ENPR) and 289 to 299 (RAAERIEKGGD). Residues 268–299 (KPVRPSEEEIRENPRARSGRLRAAERIEKGGD) are disordered.

This sequence belongs to the methyltransferase superfamily. RsmH family.

The protein resides in the cytoplasm. The enzyme catalyses cytidine(1402) in 16S rRNA + S-adenosyl-L-methionine = N(4)-methylcytidine(1402) in 16S rRNA + S-adenosyl-L-homocysteine + H(+). Its function is as follows. Specifically methylates the N4 position of cytidine in position 1402 (C1402) of 16S rRNA. In Thermotoga petrophila (strain ATCC BAA-488 / DSM 13995 / JCM 10881 / RKU-1), this protein is Ribosomal RNA small subunit methyltransferase H.